The sequence spans 103 residues: Large ribosomal subunit protein bL21 (103 aa).

The protein belongs to the bacterial ribosomal protein bL21 family. In terms of assembly, part of the 50S ribosomal subunit. Contacts protein L20.

This protein binds to 23S rRNA in the presence of protein L20. This is Large ribosomal subunit protein bL21 from Salmonella paratyphi A (strain ATCC 9150 / SARB42).